The following is a 436-amino-acid chain: Phosphoribosylamine--glycine ligase (436 aa).

The ATP-grasp domain maps to Arg106–Asp318. ATP is bound at residue Leu133–Thr196. Mg(2+)-binding residues include Gln276, Glu288, and Asn290. Mn(2+)-binding residues include Gln276, Glu288, and Asn290.

This sequence belongs to the GARS family. Mg(2+) is required as a cofactor. Mn(2+) serves as cofactor.

The enzyme catalyses 5-phospho-beta-D-ribosylamine + glycine + ATP = N(1)-(5-phospho-beta-D-ribosyl)glycinamide + ADP + phosphate + H(+). It participates in purine metabolism; IMP biosynthesis via de novo pathway; N(1)-(5-phospho-D-ribosyl)glycinamide from 5-phospho-alpha-D-ribose 1-diphosphate: step 2/2. The protein is Phosphoribosylamine--glycine ligase of Methanobrevibacter smithii (strain ATCC 35061 / DSM 861 / OCM 144 / PS).